The primary structure comprises 571 residues: MTLNGWMQIALYGAVVLALVRPLGGYMTRVFDGERTLLSPALAPIERGLYRVSGIDARQEQTWLAYAGAMVLFNVAGFVLLYALLRLQALLPLNPADQAAVAPDLAFNTATSFVTNTNWQSYGGETTLTYLSQMLGLTHQNFVSAASGMAVAVALIRGFARASTKTLGSCWVDMTRATLYVLLPLCTVLALFYVSQGMPQTLSPYVEATTLEGAKQTIAVGPVASQVAIKMLGTNGGGFFNANAAHPFENPTALSNFLQMLSIFVIGAALTNVFGRMVGDERQGWAILTAMGLLFLAGVTVTYWAEANAQGVLSNLGLTGGNMEGKEVRFGIAASALFAVITTAASCGAVNAMHDSFTALGGLIPLLNMQLGEVIIGGVGAGLYGMLVFVVVAIFVAGLMVGRTPEYLGKKIEAREVKMAMLGILCLPLMMLGFTAFATVVPDGLAGPANAGPHGFSEILYAYTSAAANNGSAFGGLTANTLFYNTTLAIGMLVGRFFVKIPVLAIAGSLAAKKRLPASAGTFPTHGGLFVGLLVGVVLIIGGLTFFPALALGPVVEHFAGAAGQTFATGG.

Helical transmembrane passes span 5 to 25 (GWMQ…PLGG), 64 to 84 (LAYA…LYAL), 136 to 156 (GLTH…VALI), 179 to 199 (LYVL…QGMP), 220 to 240 (VGPV…GGFF), 254 to 274 (LSNF…TNVF), 285 to 305 (WAIL…TYWA), 330 to 350 (FGIA…CGAV), 375 to 395 (IIGG…VAIF), 421 to 441 (MLGI…ATVV), 488 to 508 (LAIG…AIAG), and 527 to 547 (GGLF…LTFF).

This sequence belongs to the KdpA family. The system is composed of three essential subunits: KdpA, KdpB and KdpC.

It localises to the cell inner membrane. In terms of biological role, part of the high-affinity ATP-driven potassium transport (or Kdp) system, which catalyzes the hydrolysis of ATP coupled with the electrogenic transport of potassium into the cytoplasm. This subunit binds the periplasmic potassium ions and delivers the ions to the membrane domain of KdpB through an intramembrane tunnel. In Methylorubrum extorquens (strain PA1) (Methylobacterium extorquens), this protein is Potassium-transporting ATPase potassium-binding subunit.